The sequence spans 151 residues: Troponin C, isoallergen Bla g 6.0101 (151 aa).

4 consecutive EF-hand domains span residues 7 to 42 (EQIQ…LGHR), 43 to 78 (LDDD…FLVE), 83 to 118 (AMQQ…LDDK), and 119 to 151 (ITAE…MTGE). Ca(2+) is bound by residues Asp56, Asp58, Ser60, Glu62, and Glu67. Positions 132, 134, 136, 138, and 143 each coordinate Ca(2+).

The protein belongs to the troponin C family.

Its function is as follows. Troponin is the central regulatory protein of striated muscle contraction. It consists of three components: Troponin-I (Tn-I) which is the inhibitor of actomyosin ATPase, Troponin-T (Tn-T) which contains the binding site for tropomyosin and Troponin-C (Tn-C). The binding of calcium to Tn-C abolishes the inhibitory action of Tn on actin filaments. The chain is Troponin C, isoallergen Bla g 6.0101 from Blattella germanica (German cockroach).